A 491-amino-acid polypeptide reads, in one-letter code: Bifunctional protein GlmU (491 aa).

The segment at 1–238 (MTTQPAVPAA…EWEIRGVNDR (238 aa)) is pyrophosphorylase. Residues 14-17 (LAAG), lysine 28, glutamine 81, 86-87 (GT), 110-112 (YGD), glycine 149, glutamate 163, asparagine 178, and asparagine 236 contribute to the UDP-N-acetyl-alpha-D-glucosamine site. Aspartate 112 contacts Mg(2+). Asparagine 236 provides a ligand contact to Mg(2+). The tract at residues 239 to 259 (AQLADLAAEANRRTLRRWMLA) is linker. An N-acetyltransferase region spans residues 260-491 (GVTIADPATT…TASTDREIQP (232 aa)). UDP-N-acetyl-alpha-D-glucosamine-binding residues include arginine 341 and lysine 359. Histidine 371 functions as the Proton acceptor in the catalytic mechanism. Residues tyrosine 374 and asparagine 385 each contribute to the UDP-N-acetyl-alpha-D-glucosamine site. Residues alanine 388, 394 to 395 (NY), serine 413, and alanine 431 contribute to the acetyl-CoA site. The interval 460–491 (AKRPGTPAAEAAQRANDESTGTTASTDREIQP) is disordered.

The protein in the N-terminal section; belongs to the N-acetylglucosamine-1-phosphate uridyltransferase family. In the C-terminal section; belongs to the transferase hexapeptide repeat family. In terms of assembly, homotrimer. It depends on Mg(2+) as a cofactor.

Its subcellular location is the cytoplasm. It catalyses the reaction alpha-D-glucosamine 1-phosphate + acetyl-CoA = N-acetyl-alpha-D-glucosamine 1-phosphate + CoA + H(+). It carries out the reaction N-acetyl-alpha-D-glucosamine 1-phosphate + UTP + H(+) = UDP-N-acetyl-alpha-D-glucosamine + diphosphate. It functions in the pathway nucleotide-sugar biosynthesis; UDP-N-acetyl-alpha-D-glucosamine biosynthesis; N-acetyl-alpha-D-glucosamine 1-phosphate from alpha-D-glucosamine 6-phosphate (route II): step 2/2. It participates in nucleotide-sugar biosynthesis; UDP-N-acetyl-alpha-D-glucosamine biosynthesis; UDP-N-acetyl-alpha-D-glucosamine from N-acetyl-alpha-D-glucosamine 1-phosphate: step 1/1. Its pathway is bacterial outer membrane biogenesis; LPS lipid A biosynthesis. Functionally, catalyzes the last two sequential reactions in the de novo biosynthetic pathway for UDP-N-acetylglucosamine (UDP-GlcNAc). The C-terminal domain catalyzes the transfer of acetyl group from acetyl coenzyme A to glucosamine-1-phosphate (GlcN-1-P) to produce N-acetylglucosamine-1-phosphate (GlcNAc-1-P), which is converted into UDP-GlcNAc by the transfer of uridine 5-monophosphate (from uridine 5-triphosphate), a reaction catalyzed by the N-terminal domain. The protein is Bifunctional protein GlmU of Kineococcus radiotolerans (strain ATCC BAA-149 / DSM 14245 / SRS30216).